Consider the following 350-residue polypeptide: Flap endonuclease 1 (350 aa).

The N-domain stretch occupies residues 1–102; it reads MGVTALRELI…REIERRQKLK (102 aa). 7 residues coordinate Mg(2+): aspartate 31, aspartate 84, glutamate 156, glutamate 158, aspartate 177, aspartate 179, and aspartate 240. The interval 120–261 is I-domain; sequence EARKYAQMSA…TALRYVKSYG (142 aa). Positions 339–347 are interaction with PCNA; sequence KQSTLDMFF.

The protein belongs to the XPG/RAD2 endonuclease family. FEN1 subfamily. As to quaternary structure, interacts with PCNA. PCNA stimulates the nuclease activity without altering cleavage specificity. Requires Mg(2+) as cofactor.

Its function is as follows. Structure-specific nuclease with 5'-flap endonuclease and 5'-3' exonuclease activities involved in DNA replication and repair. During DNA replication, cleaves the 5'-overhanging flap structure that is generated by displacement synthesis when DNA polymerase encounters the 5'-end of a downstream Okazaki fragment. Binds the unpaired 3'-DNA end and kinks the DNA to facilitate 5' cleavage specificity. Cleaves one nucleotide into the double-stranded DNA from the junction in flap DNA, leaving a nick for ligation. Also involved in the base excision repair (BER) pathway. Acts as a genome stabilization factor that prevents flaps from equilibrating into structures that lead to duplications and deletions. Also possesses 5'-3' exonuclease activity on nicked or gapped double-stranded DNA. This chain is Flap endonuclease 1, found in Ignicoccus hospitalis (strain KIN4/I / DSM 18386 / JCM 14125).